We begin with the raw amino-acid sequence, 491 residues long: Phosphatidylglycerol--prolipoprotein diacylglyceryl transferase (491 aa).

A run of 3 helical transmembrane segments spans residues 24 to 44 (IPLR…IWWG), 58 to 78 (VLDV…AYHV), and 98 to 118 (IWQG…GAWI). Arg146 provides a ligand contact to a 1,2-diacyl-sn-glycero-3-phospho-(1'-sn-glycerol). Helical transmembrane passes span 192-212 (IVHP…IALV) and 256-276 (INNF…VFAT). Residues 309–323 (NGPAEPGATASTATD) show a composition bias toward low complexity. Residues 309 to 491 (NGPAEPGATA…DRVDSGENDA (183 aa)) are disordered. The segment covering 347–360 (KGDRGTADAADTAK) has biased composition (basic and acidic residues). Low complexity-rich tracts occupy residues 361–387 (DASA…GSSD), 394–406 (AVKA…AAEK), and 415–438 (AGEA…SAKS). Residues 453–462 (NESESTRDNE) show a composition bias toward basic and acidic residues. Over residues 463–481 (STSAGTAASATGSAGAGAT) the composition is skewed to low complexity. Residues 482 to 491 (DRVDSGENDA) are compositionally biased toward basic and acidic residues.

This sequence belongs to the Lgt family.

It is found in the cell membrane. The catalysed reaction is L-cysteinyl-[prolipoprotein] + a 1,2-diacyl-sn-glycero-3-phospho-(1'-sn-glycerol) = an S-1,2-diacyl-sn-glyceryl-L-cysteinyl-[prolipoprotein] + sn-glycerol 1-phosphate + H(+). The protein operates within protein modification; lipoprotein biosynthesis (diacylglyceryl transfer). Functionally, catalyzes the transfer of the diacylglyceryl group from phosphatidylglycerol to the sulfhydryl group of the N-terminal cysteine of a prolipoprotein, the first step in the formation of mature lipoproteins. The protein is Phosphatidylglycerol--prolipoprotein diacylglyceryl transferase of Nocardia farcinica (strain IFM 10152).